The sequence spans 102 residues: EPIDERMAL PATTERNING FACTOR-like protein 9 (102 aa).

Positions 1 to 31 (MKHEMMNIKPRCITIFFLLFALLLGNYVVQA) are cleaved as a signal peptide. 3 disulfide bridges follow: Cys65/Cys98, Cys70/Cys77, and Cys73/Cys100.

It belongs to the plant cysteine rich small secretory peptide family. Epidermal patterning factor subfamily. Interacts with ERECTA and TMM. In terms of tissue distribution, expressed in immature organs, including leaves, stems and flower buds, but not in roots, shoot apical meristem and petals. Detected in the mesophyll tissues but not in the epidermal tissues where stomata develop.

The protein localises to the secreted. Its subcellular location is the extracellular space. It localises to the apoplast. Functionally, positively regulates stomatal density and patterning. Acts by competing with EPF2 (AC Q8LC53) for the same receptors, ERECTA (AC Q42371) and TMM (AC Q9SSD1). Not cleaved by the protease CRSP (AC Q9LNU1). The sequence is that of EPIDERMAL PATTERNING FACTOR-like protein 9 from Arabidopsis thaliana (Mouse-ear cress).